Consider the following 556-residue polypeptide: Calcium-dependent protein kinase 5 (556 aa).

The disordered stretch occupies residues 1-40; sequence MGNSCRGSFKDKLDEGDNNKPEDYSKTSTTNLSSNSDHSP. A lipid anchor (N-myristoyl glycine) is attached at glycine 2. Basic and acidic residues predominate over residues 8-25; it reads SFKDKLDEGDNNKPEDYS. Residues 26–39 show a composition bias toward low complexity; sequence KTSTTNLSSNSDHS. The region spanning 97–355 is the Protein kinase domain; that stretch reads YTLSRKLGQG…AHEVLRHPWI (259 aa). Residues 103–111 and lysine 126 each bind ATP; that span reads LGQGQFGTT. Aspartate 221 functions as the Proton acceptor in the catalytic mechanism. Serine 261 carries the phosphoserine modification. Residues 361–391 are autoinhibitory domain; sequence APDRALDPAVLSRLKQFSAMNKLKKMALKVI. EF-hand domains are found at residues 398–433, 434–469, 470–505, and 509–539; these read EEIAGLREMFQAMDTDNSGAITFDELKAGLRKYGST, LKDTEIHDLMDAADVDNSGTIDYSEFIAATIHLNKL, EREEHLVAAFQYFDKDGSGFITIDELQQACVEHGMA, and LEDIIKEVDQNNDGKIDYGEFVEMMQKGNAG. 18 residues coordinate Ca(2+): aspartate 411, aspartate 413, serine 415, glutamate 422, aspartate 447, aspartate 449, serine 451, threonine 453, glutamate 458, aspartate 483, aspartate 485, serine 487, glutamate 494, aspartate 517, asparagine 519, aspartate 521, lysine 523, and glutamate 528.

It belongs to the protein kinase superfamily. Ser/Thr protein kinase family. CDPK subfamily.

It is found in the membrane. The enzyme catalyses L-seryl-[protein] + ATP = O-phospho-L-seryl-[protein] + ADP + H(+). It catalyses the reaction L-threonyl-[protein] + ATP = O-phospho-L-threonyl-[protein] + ADP + H(+). Its activity is regulated as follows. Activated by calcium. Autophosphorylation may play an important role in the regulation of the kinase activity. May play a role in signal transduction pathways that involve calcium as a second messenger. The chain is Calcium-dependent protein kinase 5 (CPK5) from Arabidopsis thaliana (Mouse-ear cress).